A 67-amino-acid polypeptide reads, in one-letter code: Alpha-toxin Bu1 (67 aa).

An LCN-type CS-alpha/beta domain is found at 3-65 (RDAYIADDKN…VPIRIPGRCR (63 aa)). 4 disulfides stabilise this stretch: Cys-13–Cys-64, Cys-17–Cys-37, Cys-23–Cys-47, and Cys-27–Cys-49. Residue Arg-65 is modified to Arginine amide.

The protein belongs to the long (4 C-C) scorpion toxin superfamily. Sodium channel inhibitor family. Alpha subfamily. Expressed by the venom gland.

It localises to the secreted. In terms of biological role, alpha toxins bind voltage-independently at site-3 of sodium channels (Nav) and inhibit the inactivation of the activated channels, thereby blocking neuronal transmission. Since the experiments have been done on F11 cells (immortalized cell line derived from rat DRG neurons mainly expressing Nav1.3/SCN3A, but also Nav1.7/SCN9A and Nav1.2/SCN2A), it is supposed to act on these channels. The slow of inactivation process is partially reversible. Is lethal to mice. The chain is Alpha-toxin Bu1 from Buthacus macrocentrus (Turkish scorpion).